A 548-amino-acid polypeptide reads, in one-letter code: Chaperonin GroEL (548 aa).

Residues 29 to 32 (TMGP), K50, 86 to 90 (DGTTT), G414, 478 to 480 (NAA), and D494 each bind ATP.

Belongs to the chaperonin (HSP60) family. Forms a cylinder of 14 subunits composed of two heptameric rings stacked back-to-back. Interacts with the co-chaperonin GroES.

Its subcellular location is the cytoplasm. It catalyses the reaction ATP + H2O + a folded polypeptide = ADP + phosphate + an unfolded polypeptide.. Together with its co-chaperonin GroES, plays an essential role in assisting protein folding. The GroEL-GroES system forms a nano-cage that allows encapsulation of the non-native substrate proteins and provides a physical environment optimized to promote and accelerate protein folding. This is Chaperonin GroEL from Legionella pneumophila (strain Corby).